A 302-amino-acid chain; its full sequence is Calpain-1 catalytic subunit (302 aa).

The segment at 1–114 is domain III; it reads RESGCSFVLA…KRAGTQELDD (114 aa). The tract at residues 115–130 is linker; the sequence is QIQANLPDEQVLSAEE. The domain IV stretch occupies residues 131-301; it reads IDENFKALFR…LFKWLQLTMF (171 aa). 3 EF-hand domains span residues 173 to 206, 203 to 238, and 268 to 302; these read FSMESCRSMVNLMDRDGNGKLGLVEFNILWNRIR, NRIRNYLAIFRKFDLDKSGSMSAYEMRMAIESAGFK, and VRLETMFRFFKTLDTDLDGVVTFDLFKWLQLTMFA. Residues Asp-186, Asp-188, Asn-190, Lys-192, Glu-197, Asp-216, Asp-218, Ser-220, Ser-222, and Glu-227 each contribute to the Ca(2+) site.

This sequence belongs to the peptidase C2 family. Forms a heterodimer with a small (regulatory) subunit CAPNS1. Requires Ca(2+) as cofactor. Post-translationally, the N-terminus is blocked. In terms of processing, undergoes calcium-induced successive autoproteolytic cleavages that generate a membrane-bound 78 kDa active form and an intracellular 75 kDa active form. Calpastatin reduces with high efficiency the transition from 78 kDa to 75 kDa calpain forms. Ubiquitous.

It is found in the cytoplasm. The protein resides in the cell membrane. It catalyses the reaction Broad endopeptidase specificity.. With respect to regulation, activated by micromolar concentrations of calcium and inhibited by calpastatin. In terms of biological role, calcium-regulated non-lysosomal thiol-protease which catalyzes limited proteolysis of substrates involved in cytoskeletal remodeling and signal transduction. Proteolytically cleaves CTBP1. Cleaves and activates caspase-7 (CASP7). The chain is Calpain-1 catalytic subunit from Oryctolagus cuniculus (Rabbit).